The chain runs to 290 residues: Xyloglucan endotransglucosylase/hydrolase protein 9 (290 aa).

The first 26 residues, Met1–Gly26, serve as a signal peptide directing secretion. One can recognise a GH16 domain in the interval Ala27 to Tyr215. The N-linked (GlcNAc...) asparagine glycan is linked to Asn55. Glu101 functions as the Nucleophile in the catalytic mechanism. Glu105 serves as the catalytic Proton donor. Xyloglucan is bound at residue Glu105. Asn109 carries an N-linked (GlcNAc...) asparagine glycan. Residues Gln118–Asn120, Asn128–Glu130, Asp194–Trp195, and Gly199 contribute to the xyloglucan site. 2 cysteine pairs are disulfide-bonded: Cys223/Cys234 and Cys271/Cys284. Position 276 (Arg276) interacts with xyloglucan.

This sequence belongs to the glycosyl hydrolase 16 family. XTH group 1 subfamily. In terms of processing, contains at least one intrachain disulfide bond essential for its enzymatic activity. Highly expressed in shoot apices. In the vegetative and reproductive phases, it accumulates in the shoot apex region, where cell division is most active. In the reproductive phase, it is also expressed in flower buds, flower stalks and internodes bearing flowers.

Its subcellular location is the secreted. It is found in the cell wall. The protein resides in the extracellular space. It localises to the apoplast. The catalysed reaction is breaks a beta-(1-&gt;4) bond in the backbone of a xyloglucan and transfers the xyloglucanyl segment on to O-4 of the non-reducing terminal glucose residue of an acceptor, which can be a xyloglucan or an oligosaccharide of xyloglucan.. In terms of biological role, catalyzes xyloglucan endohydrolysis (XEH) and/or endotransglycosylation (XET). Cleaves and religates xyloglucan polymers, an essential constituent of the primary cell wall, and thereby participates in cell wall construction of growing tissues. Involved in internodal cell elongation. This is Xyloglucan endotransglucosylase/hydrolase protein 9 (XTH9) from Arabidopsis thaliana (Mouse-ear cress).